The sequence spans 216 residues: Holliday junction branch migration complex subunit RuvA (216 aa).

Residues 1-64 (MISFIKGVLI…EDAQQLYGFK (64 aa)) are domain I. Residues 65–143 (SKVDKKVFQE…KMANEIYAQT (79 aa)) are domain II. Residues 144-163 (SGTTTTSQDSQAQQAPTSVV) form a flexible linker region. Positions 164-216 (LANSIFNESVDALLALGYKQKDAEKMARSAMGDATTAAEVIRKALQGSIKSKR) are domain III.

This sequence belongs to the RuvA family. As to quaternary structure, homotetramer. Forms an RuvA(8)-RuvB(12)-Holliday junction (HJ) complex. HJ DNA is sandwiched between 2 RuvA tetramers; dsDNA enters through RuvA and exits via RuvB. An RuvB hexamer assembles on each DNA strand where it exits the tetramer. Each RuvB hexamer is contacted by two RuvA subunits (via domain III) on 2 adjacent RuvB subunits; this complex drives branch migration. In the full resolvosome a probable DNA-RuvA(4)-RuvB(12)-RuvC(2) complex forms which resolves the HJ.

The protein resides in the cytoplasm. Functionally, the RuvA-RuvB-RuvC complex processes Holliday junction (HJ) DNA during genetic recombination and DNA repair, while the RuvA-RuvB complex plays an important role in the rescue of blocked DNA replication forks via replication fork reversal (RFR). RuvA specifically binds to HJ cruciform DNA, conferring on it an open structure. The RuvB hexamer acts as an ATP-dependent pump, pulling dsDNA into and through the RuvAB complex. HJ branch migration allows RuvC to scan DNA until it finds its consensus sequence, where it cleaves and resolves the cruciform DNA. This Francisella tularensis subsp. tularensis (strain WY96-3418) protein is Holliday junction branch migration complex subunit RuvA.